Reading from the N-terminus, the 328-residue chain is MNDQWYKHLIGARTIKTGIAIFLTAVFCMALDLTPIYAILTAVVTIEPTAKASLIKGYRRLPATVIGAGFAVLFTYLFGDQSPFTYALSATFTILFCTKLKLQVGTNVAVLTSLAMIPGIHDAYIFNFLSRTLTAIIGLVTSGLINFMVFPPKYYGQVEEKLSKTDALMYKLFYNRCQELILSRLQSDKSEKAYKNIFNLNNQVETLISYQRDELSYHKKKECDWKLLNQLTKRAYTNRLFITHLSNIIYLPKNTRVNFSGDEKMALLKISSSIKDIFYDGSFKREDDSVETLRSTIKALEISGENQIKSHILYEVLMIYRLLDSRYA.

The next 4 helical transmembrane spans lie at 19 to 39 (IAIF…IYAI), 61 to 81 (LPAT…FGDQ), 108 to 128 (VAVL…IFNF), and 132 to 152 (TLTA…VFPP).

The protein belongs to the UPF0421 family.

Its subcellular location is the cell membrane. The protein is UPF0421 protein SAUSA300_1870 of Staphylococcus aureus (strain USA300).